The primary structure comprises 270 residues: Formamidopyrimidine-DNA glycosylase (270 aa).

Pro2 acts as the Schiff-base intermediate with DNA in catalysis. Glu3 (proton donor) is an active-site residue. The active-site Proton donor; for beta-elimination activity is Lys58. His91, Arg110, and Arg151 together coordinate DNA. An FPG-type zinc finger spans residues 236-270; the sequence is FVYGRGGEFCKVCGSTLREIRLGQRASVYCPRCQR. The Proton donor; for delta-elimination activity role is filled by Arg260.

The protein belongs to the FPG family. Monomer. Zn(2+) is required as a cofactor.

The catalysed reaction is Hydrolysis of DNA containing ring-opened 7-methylguanine residues, releasing 2,6-diamino-4-hydroxy-5-(N-methyl)formamidopyrimidine.. The enzyme catalyses 2'-deoxyribonucleotide-(2'-deoxyribose 5'-phosphate)-2'-deoxyribonucleotide-DNA = a 3'-end 2'-deoxyribonucleotide-(2,3-dehydro-2,3-deoxyribose 5'-phosphate)-DNA + a 5'-end 5'-phospho-2'-deoxyribonucleoside-DNA + H(+). In terms of biological role, involved in base excision repair of DNA damaged by oxidation or by mutagenic agents. Acts as a DNA glycosylase that recognizes and removes damaged bases. Has a preference for oxidized purines, such as 7,8-dihydro-8-oxoguanine (8-oxoG). Has AP (apurinic/apyrimidinic) lyase activity and introduces nicks in the DNA strand. Cleaves the DNA backbone by beta-delta elimination to generate a single-strand break at the site of the removed base with both 3'- and 5'-phosphates. This is Formamidopyrimidine-DNA glycosylase from Pseudomonas aeruginosa (strain LESB58).